The following is a 612-amino-acid chain: Elongation factor 4 (612 aa).

The region spanning 11-193 (KHIRNFSIIA…KLVTDVPAPT (183 aa)) is the tr-type G domain. GTP-binding positions include 23–28 (DHGKST) and 140–143 (NKID).

This sequence belongs to the TRAFAC class translation factor GTPase superfamily. Classic translation factor GTPase family. LepA subfamily.

The protein resides in the cell membrane. It catalyses the reaction GTP + H2O = GDP + phosphate + H(+). Its function is as follows. Required for accurate and efficient protein synthesis under certain stress conditions. May act as a fidelity factor of the translation reaction, by catalyzing a one-codon backward translocation of tRNAs on improperly translocated ribosomes. Back-translocation proceeds from a post-translocation (POST) complex to a pre-translocation (PRE) complex, thus giving elongation factor G a second chance to translocate the tRNAs correctly. Binds to ribosomes in a GTP-dependent manner. This Latilactobacillus sakei subsp. sakei (strain 23K) (Lactobacillus sakei subsp. sakei) protein is Elongation factor 4.